A 147-amino-acid polypeptide reads, in one-letter code: Hemoglobin subunit epsilon-2 (147 aa).

In terms of domain architecture, Globin spans 3–147 (HFTTEENVAV…VANALTHKYH (145 aa)). Y64 and H93 together coordinate heme b.

This sequence belongs to the globin family. As to expression, red blood cells.

Functionally, hemoglobin epsilon chain is a beta-type chain found in early embryos. In Bos taurus (Bovine), this protein is Hemoglobin subunit epsilon-2 (HBE2).